A 62-amino-acid chain; its full sequence is UPF0434 protein ABO_2103 (62 aa).

It belongs to the UPF0434 family.

The sequence is that of UPF0434 protein ABO_2103 from Alcanivorax borkumensis (strain ATCC 700651 / DSM 11573 / NCIMB 13689 / SK2).